We begin with the raw amino-acid sequence, 390 residues long: Pyruvate dehydrogenase E1 component subunit alpha, somatic form, mitochondrial (390 aa).

Residues 1–29 (MRKMLAAVSRVLSGASQKPASRVLVASRN) constitute a mitochondrion transit peptide. At lysine 63 the chain carries N6-acetyllysine; alternate. Lysine 63 is subject to N6-succinyllysine; alternate. Histidine 92, tyrosine 118, arginine 119, alanine 157, glycine 165, valine 167, aspartate 196, glycine 197, alanine 198, asparagine 225, and tyrosine 227 together coordinate pyruvate. The thiamine diphosphate site is built by tyrosine 118 and arginine 119. Residues glycine 165, valine 167, aspartate 196, glycine 197, alanine 198, and asparagine 225 each contribute to the thiamine diphosphate site. Mg(2+) is bound at residue aspartate 196. Residues asparagine 225 and tyrosine 227 each contribute to the Mg(2+) site. Serine 232 is subject to Phosphoserine; by PDK1. An N6-acetyllysine; alternate modification is found at lysine 244. Lysine 244 bears the N6-succinyllysine; alternate mark. Residue lysine 277 is modified to N6-succinyllysine. Histidine 292 lines the thiamine diphosphate pocket. The residue at position 293 (serine 293) is a Phosphoserine; by PDK1, PDK2, PDK3 and PDK4. Serine 295 carries the post-translational modification Phosphoserine. Phosphoserine; by PDK1, PDK2, PDK3 and PDK4 is present on serine 300. Tyrosine 301 carries the phosphotyrosine modification. The residue at position 313 (lysine 313) is an N6-acetyllysine; alternate. Residue lysine 313 is modified to N6-succinyllysine; alternate. An N6-acetyllysine mark is found at lysine 321 and lysine 336. Lysine 385 carries the N6-succinyllysine modification.

In terms of assembly, heterotetramer of two PDHA1 and two PDHB subunits. The heterotetramer interacts with DLAT, and is part of the multimeric pyruvate dehydrogenase complex that contains multiple copies of pyruvate dehydrogenase (E1), dihydrolipoamide acetyltransferase (DLAT, E2) and lipoamide dehydrogenase (DLD, E3). These subunits are bound to an inner core composed of about 48 DLAT and 12 PDHX molecules. Thiamine diphosphate serves as cofactor. Mg(2+) is required as a cofactor. In terms of processing, phosphorylation at Ser-232, Ser-293 and Ser-300 by PDK family kinases inactivates the enzyme; for this phosphorylation at a single site is sufficient. Phosphorylation at Ser-293 interferes with access to active site, and thereby inactivates the enzyme. Dephosphorylation at all three sites, i.e. at Ser-232, Ser-293 and Ser-300, is required for reactivation. Post-translationally, acetylation alters the phosphorylation pattern. Deacetylated by SIRT3.

The protein resides in the mitochondrion matrix. The enzyme catalyses N(6)-[(R)-lipoyl]-L-lysyl-[protein] + pyruvate + H(+) = N(6)-[(R)-S(8)-acetyldihydrolipoyl]-L-lysyl-[protein] + CO2. Pyruvate dehydrogenase activity is inhibited by phosphorylation of PDHA1; it is reactivated by dephosphorylation. Its function is as follows. The pyruvate dehydrogenase complex catalyzes the overall conversion of pyruvate to acetyl-CoA and CO(2), and thereby links the glycolytic pathway to the tricarboxylic cycle. In Pan troglodytes (Chimpanzee), this protein is Pyruvate dehydrogenase E1 component subunit alpha, somatic form, mitochondrial (PDHA1).